Consider the following 349-residue polypeptide: Polyamine aminopropyltransferase 2 (349 aa).

In terms of domain architecture, PABS spans 29–267 (DGAITAIEDS…SSWGFLLASD (239 aa)). Gln60 is a binding site for S-methyl-5'-thioadenosine. The spermidine site is built by His91 and Glu115. Residues Asp135 and 167-168 (DG) each bind S-methyl-5'-thioadenosine. Residue Asp185 is the Proton acceptor of the active site. Pro194 is an S-methyl-5'-thioadenosine binding site.

The protein belongs to the spermidine/spermine synthase family. In terms of assembly, homodimer or homotetramer.

It is found in the cytoplasm. It carries out the reaction S-adenosyl 3-(methylsulfanyl)propylamine + putrescine = S-methyl-5'-thioadenosine + spermidine + H(+). It functions in the pathway amine and polyamine biosynthesis; spermidine biosynthesis; spermidine from putrescine: step 1/1. Catalyzes the irreversible transfer of a propylamine group from the amino donor S-adenosylmethioninamine (decarboxy-AdoMet) to putrescine (1,4-diaminobutane) to yield spermidine. This is Polyamine aminopropyltransferase 2 from Pseudomonas aeruginosa (strain ATCC 15692 / DSM 22644 / CIP 104116 / JCM 14847 / LMG 12228 / 1C / PRS 101 / PAO1).